A 72-amino-acid polypeptide reads, in one-letter code: MAMNTVFLHLSEEAIKRLNKLRGWRKVSRSAILREAVEQYLERQQFPVRKAKGGRQKGEVVGVDDQCKEHKE.

The tract at residues A51 to E72 is disordered.

It belongs to the YiiE family.

This is an uncharacterized protein from Escherichia coli O157:H7.